The primary structure comprises 252 residues: Probable endonuclease 4 (252 aa).

9 residues coordinate Zn(2+): H56, H96, E129, D162, H165, H191, D204, H206, and E233.

Belongs to the AP endonuclease 2 family. Zn(2+) serves as cofactor.

It catalyses the reaction Endonucleolytic cleavage to 5'-phosphooligonucleotide end-products.. Functionally, endonuclease IV plays a role in DNA repair. It cleaves phosphodiester bonds at apurinic or apyrimidinic (AP) sites, generating a 3'-hydroxyl group and a 5'-terminal sugar phosphate. This chain is Probable endonuclease 4, found in Mycobacterium ulcerans (strain Agy99).